The following is a 189-amino-acid chain: dCTP deaminase, dUMP-forming (189 aa).

DCTP contacts are provided by residues 101-106 (KSSLGR), Asp-119, 127-129 (TLE), Gln-148, Tyr-162, and Gln-174. Glu-129 (proton donor/acceptor) is an active-site residue.

Belongs to the dCTP deaminase family. As to quaternary structure, homotrimer.

The enzyme catalyses dCTP + 2 H2O = dUMP + NH4(+) + diphosphate. The protein operates within pyrimidine metabolism; dUMP biosynthesis; dUMP from dCTP: step 1/1. In terms of biological role, bifunctional enzyme that catalyzes both the deamination of dCTP to dUTP and the hydrolysis of dUTP to dUMP without releasing the toxic dUTP intermediate. This chain is dCTP deaminase, dUMP-forming, found in Rhodococcus jostii (strain RHA1).